Here is a 346-residue protein sequence, read N- to C-terminus: Calcium homeostasis modulator protein 1 (346 aa).

Residues 1 to 21 (MMDKFRMIFQFLQSNQESFMN) lie on the Cytoplasmic side of the membrane. Positions 10 to 37 (QFLQSNQESFMNGICGIMALASAQMYSA) are central pore. Residues 22–37 (GICGIMALASAQMYSA) form a helical membrane-spanning segment. The Extracellular portion of the chain corresponds to 38–49 (FDFNCPCLPGYN). 2 cysteine pairs are disulfide-bonded: cysteine 42–cysteine 127 and cysteine 44–cysteine 161. A helical membrane pass occupies residues 50–72 (AAYSAGILLAPPLVLFLLGLVMN). The segment at 63–70 (VLFLLGLV) is phospholipid-binding. The Cytoplasmic segment spans residues 73 to 99 (NNVSMLAEEWKRPLGRRAKDPAVLRYM). A helical membrane pass occupies residues 100–125 (FCSMAQRALIAPVVWVAVTLLDGKCF). Cysteine 101 is lipidated: S-palmitoyl cysteine. The interval 105–117 (QRALIAPVVWVAV) is phospholipid-binding. The Extracellular portion of the chain corresponds to 126 to 180 (LCAFCTAVPVSALGNGSLAPGLPAPELARLLARVPCPEIYDGDWLLAREVAVRYL). Asparagine 140 is a glycosylation site (N-linked (GlcNAc...) asparagine). A helical transmembrane segment spans residues 181–206 (RCISQALGWSFVLLTTLLAFVVRSVR). The interval 192–202 (VLLTTLLAFVV) is phospholipid-binding. The Cytoplasmic segment spans residues 207–346 (PCFTQAAFLK…KEVATYFSKV (140 aa)). The S-palmitoyl cysteine moiety is linked to residue cysteine 208. The interval 313-346 (LRLGQEEPPLMGNGWAGGGPRPPRKEVATYFSKV) is disordered.

This sequence belongs to the CALHM family. As to quaternary structure, oligomerizes to form hexamers and octamers. Does not form gap junctions. Associates with CALHM3 as a pore-forming subunit in a hetero-hexameric channel complex. N-glycosylated. Assembly with CALHM3 is associated with N-glycan remodeling and formation of hybrid complex- and high mannose-type glycochains. This N-glycan processing regulates channel trafficking and gating kinetics. Post-translationally, palmitoylated by ZDHHC3, ZDHHC20 and possibly ZDHHC7. Palmitoylation regulates voltage-dependent gating of the channel by shifting it toward more depolarized potentials. As to expression, predominantly expressed in adult brain. Detected also in retinoic acid-differentiated SH-SY5Y cells. Specifically expressed in circumvallate taste bud cells.

It is found in the cell membrane. The protein resides in the endoplasmic reticulum membrane. The protein localises to the basolateral cell membrane. The enzyme catalyses ATP(in) = ATP(out). The catalysed reaction is Ca(2+)(in) = Ca(2+)(out). It catalyses the reaction Mg(2+)(in) = Mg(2+)(out). It carries out the reaction Na(+)(in) = Na(+)(out). The enzyme catalyses K(+)(in) = K(+)(out). The catalysed reaction is Li(+)(in) = Li(+)(out). It catalyses the reaction Rb(+)(in) = Rb(+)(out). It carries out the reaction Cs(+)(in) = Cs(+)(out). The enzyme catalyses chloride(in) = chloride(out). Its activity is regulated as follows. Regulated by membrane voltage and extracellular Ca(2+). Inhibited by Gd(3+), ruthenium red, and Zn(2+) and partially inhibited by 2-aminoethoxydiphenyl borate. In terms of biological role, pore-forming subunit of gustatory voltage-gated ion channels required for sensory perception of sweet, bitter and umami tastes. With CALHM3 forms a fast-activating voltage-gated ATP-release channel in type II taste bud cells, ATP acting as a neurotransmitter to activate afferent neural gustatory pathways. Acts both as a voltage-gated and calcium-activated ion channel: mediates neuronal excitability in response to membrane depolarization and low extracellular Ca(2+) concentration. Has poor ion selectivity and forms a wide pore (around 14 Angstroms) that mediates permeation of small ions including Ca(2+), Na(+), K(+) and Cl(-), as well as larger ions such as ATP(4-). Mediates Ca(2+) influx and downstream activation of the ERK1 and ERK2 cascade in neurons. Triggers endoplasmic reticulum stress by reducing the Ca(2+) content of the endoplasmic reticulum. May indirectly control amyloid precursor protein (APP) proteolysis and aggregated amyloid-beta (Abeta) peptides levels in a Ca(2+)-dependent manner. The protein is Calcium homeostasis modulator protein 1 of Homo sapiens (Human).